Here is a 384-residue protein sequence, read N- to C-terminus: 8-amino-7-oxononanoate synthase (384 aa).

Arginine 21 provides a ligand contact to substrate. 108 to 109 (GF) contributes to the pyridoxal 5'-phosphate binding site. Histidine 133 lines the substrate pocket. Serine 179, histidine 207, and threonine 233 together coordinate pyridoxal 5'-phosphate. Residue lysine 236 is modified to N6-(pyridoxal phosphate)lysine. Residue threonine 352 participates in substrate binding.

It belongs to the class-II pyridoxal-phosphate-dependent aminotransferase family. BioF subfamily. In terms of assembly, homodimer. Pyridoxal 5'-phosphate is required as a cofactor.

It catalyses the reaction 6-carboxyhexanoyl-[ACP] + L-alanine + H(+) = (8S)-8-amino-7-oxononanoate + holo-[ACP] + CO2. It functions in the pathway cofactor biosynthesis; biotin biosynthesis. In terms of biological role, catalyzes the decarboxylative condensation of pimeloyl-[acyl-carrier protein] and L-alanine to produce 8-amino-7-oxononanoate (AON), [acyl-carrier protein], and carbon dioxide. This Enterobacter sp. (strain 638) protein is 8-amino-7-oxononanoate synthase.